Here is a 194-residue protein sequence, read N- to C-terminus: IMP cyclohydrolase (194 aa).

This sequence belongs to the archaeal IMP cyclohydrolase family.

It catalyses the reaction IMP + H2O = 5-formamido-1-(5-phospho-D-ribosyl)imidazole-4-carboxamide. Its pathway is purine metabolism; IMP biosynthesis via de novo pathway; IMP from 5-formamido-1-(5-phospho-D-ribosyl)imidazole-4-carboxamide: step 1/1. In terms of biological role, catalyzes the cyclization of 5-formylamidoimidazole-4-carboxamide ribonucleotide to IMP. In Halobacterium salinarum (strain ATCC 29341 / DSM 671 / R1), this protein is IMP cyclohydrolase.